The following is a 147-amino-acid chain: Large ribosomal subunit protein bL9 (147 aa).

The protein belongs to the bacterial ribosomal protein bL9 family.

Functionally, binds to the 23S rRNA. The chain is Large ribosomal subunit protein bL9 from Clostridium acetobutylicum (strain ATCC 824 / DSM 792 / JCM 1419 / IAM 19013 / LMG 5710 / NBRC 13948 / NRRL B-527 / VKM B-1787 / 2291 / W).